We begin with the raw amino-acid sequence, 37 residues long: Cytochrome b6-f complex subunit 5 (37 aa).

The chain crosses the membrane as a helical span at residues 5–25 (LLSGIVLGMITVSAFGLFVAA).

Belongs to the PetG family. The 4 large subunits of the cytochrome b6-f complex are cytochrome b6, subunit IV (17 kDa polypeptide, PetD), cytochrome f and the Rieske protein, while the 4 small subunits are PetG, PetL, PetM and PetN. The complex functions as a dimer.

The protein resides in the plastid. It is found in the chloroplast thylakoid membrane. Functionally, component of the cytochrome b6-f complex, which mediates electron transfer between photosystem II (PSII) and photosystem I (PSI), cyclic electron flow around PSI, and state transitions. PetG is required for either the stability or assembly of the cytochrome b6-f complex. The protein is Cytochrome b6-f complex subunit 5 of Thalassiosira pseudonana (Marine diatom).